The sequence spans 313 residues: Malate dehydrogenase (313 aa).

NAD(+) is bound by residues 8–13 and aspartate 33; that span reads GAGNVG. Arginine 83 and arginine 89 together coordinate substrate. Residues asparagine 96 and 119 to 121 each bind NAD(+); that span reads ISN. Substrate is bound by residues asparagine 121 and arginine 152. Histidine 176 (proton acceptor) is an active-site residue.

It belongs to the LDH/MDH superfamily. MDH type 3 family.

The enzyme catalyses (S)-malate + NAD(+) = oxaloacetate + NADH + H(+). In terms of biological role, catalyzes the reversible oxidation of malate to oxaloacetate. This Parabacteroides distasonis (strain ATCC 8503 / DSM 20701 / CIP 104284 / JCM 5825 / NCTC 11152) protein is Malate dehydrogenase.